The primary structure comprises 49 residues: MRVNITLACTECGDRNYISKKNKRNNPERIELKKYCPRLKRVTLHRETK.

It belongs to the bacterial ribosomal protein bL33 family.

This is Large ribosomal subunit protein bL33B from Bacillus cereus (strain ATCC 14579 / DSM 31 / CCUG 7414 / JCM 2152 / NBRC 15305 / NCIMB 9373 / NCTC 2599 / NRRL B-3711).